A 247-amino-acid polypeptide reads, in one-letter code: ATP synthase subunit a, chloroplastic (247 aa).

5 helical membrane passes run 38–58, 95–115, 134–154, 199–219, and 220–240; these read QVLI…VIAV, VPFI…GALL, INTT…AGLS, LVVV…VMFL, and GLFT…AYIG.

The protein belongs to the ATPase A chain family. F-type ATPases have 2 components, CF(1) - the catalytic core - and CF(0) - the membrane proton channel. CF(1) has five subunits: alpha(3), beta(3), gamma(1), delta(1), epsilon(1). CF(0) has four main subunits: a, b, b' and c.

The protein localises to the plastid. It is found in the chloroplast thylakoid membrane. Functionally, key component of the proton channel; it plays a direct role in the translocation of protons across the membrane. The polypeptide is ATP synthase subunit a, chloroplastic (Lolium perenne (Perennial ryegrass)).